A 521-amino-acid polypeptide reads, in one-letter code: MEEVMISPVEHDPQGQVKQQQAAGVGILLQIMMLVLSFVLGHVLRRHRFHYLPEASGSLLIGLIVGILANISDTETSIRTWFNFHEEFFFLFLLPPIIFQSGFSLQPKPFFSNFGAIVTFAIIGTFVASVVTGGLVYLGGSMYLMYKLPFVECLMFGALISATDPVTVLSIFQDVGTDVNLYALVFGESVLNDAMAISLYRTMSLVNRQSSSGEHFFMVVIRFFETFAGSMSAGVGVGFTSALLFKYAGLDTENLQNLECCLFVLFPYFSYMLAEGVGLSGIVSILFTGIVMKRYTFSNLSEASQSFVSSFFHLISSLAETFTFIYMGFDIAMEQHSWSHVGFILFSILFIGVARAVNVFGCAYLVNLFRQENQKIPMKHQKALWYSGLRGAMAFALALQSLHDLPEGHGQIIFTATTTIVVVTVLLIGGSTGKMLEALEVVGDDLDDSMSEGFEESDHQYVPPPFSIGASSDEDTSSSGSRFKMKLKEFHKTTTSFTALDKNFLTPFFTTNSGDGDGDGE.

The Cytoplasmic segment spans residues 1–23; the sequence is MEEVMISPVEHDPQGQVKQQQAA. The helical transmembrane segment at 24 to 44 threads the bilayer; the sequence is GVGILLQIMMLVLSFVLGHVL. Topologically, residues 45 to 48 are lumenal; it reads RRHR. A helical membrane pass occupies residues 49–69; that stretch reads FHYLPEASGSLLIGLIVGILA. Residues 70-86 lie on the Cytoplasmic side of the membrane; the sequence is NISDTETSIRTWFNFHE. The segment at residues 87 to 107 is an intramembrane region (helical); sequence EFFFLFLLPPIIFQSGFSLQP. At 108 to 115 the chain is on the cytoplasmic side; the sequence is KPFFSNFG. Residues 116 to 136 form a helical membrane-spanning segment; sequence AIVTFAIIGTFVASVVTGGLV. Topologically, residues 137–141 are lumenal; the sequence is YLGGS. 2 consecutive intramembrane regions (helical) follow at residues 142–162 and 166–186; these read MYLM…LISA and VTVL…ALVF. The Lumenal portion of the chain corresponds to 187 to 222; that stretch reads GESVLNDAMAISLYRTMSLVNRQSSSGEHFFMVVIR. A helical membrane pass occupies residues 223–243; sequence FFETFAGSMSAGVGVGFTSAL. Residues 244–271 are Cytoplasmic-facing; the sequence is LFKYAGLDTENLQNLECCLFVLFPYFSY. Residues 272-292 traverse the membrane as a helical segment; it reads MLAEGVGLSGIVSILFTGIVM. Residues 293 to 310 lie on the Lumenal side of the membrane; that stretch reads KRYTFSNLSEASQSFVSS. N-linked (GlcNAc...) asparagine glycosylation occurs at Asn-299. A helical membrane pass occupies residues 311-331; the sequence is FFHLISSLAETFTFIYMGFDI. Residues 332-340 lie on the Cytoplasmic side of the membrane; the sequence is AMEQHSWSH. The chain crosses the membrane as a helical span at residues 341-361; it reads VGFILFSILFIGVARAVNVFG. Over 362–382 the chain is Lumenal; it reads CAYLVNLFRQENQKIPMKHQK. Residues 383–402 traverse the membrane as a helical segment; sequence ALWYSGLRGAMAFALALQSL. Residues 403 to 411 are Cytoplasmic-facing; that stretch reads HDLPEGHGQ. The helical transmembrane segment at 412-432 threads the bilayer; it reads IIFTATTTIVVVTVLLIGGST. The Lumenal segment spans residues 433–521; that stretch reads GKMLEALEVV…NSGDGDGDGE (89 aa). A disordered region spans residues 453 to 480; that stretch reads GFEESDHQYVPPPFSIGASSDEDTSSSG. The span at 467-480 shows a compositional bias: low complexity; that stretch reads SIGASSDEDTSSSG.

Belongs to the monovalent cation:proton antiporter 1 (CPA1) transporter (TC 2.A.36) family. As to expression, expressed in roots, leaves, stems, flowers and siliques. Detected at low levels in roots and shoots.

Its subcellular location is the endosome membrane. The protein resides in the golgi apparatus. It is found in the trans-Golgi network membrane. The protein localises to the golgi stack membrane. It catalyses the reaction Na(+)(in) + H(+)(out) = Na(+)(out) + H(+)(in). It carries out the reaction K(+)(in) + H(+)(out) = K(+)(out) + H(+)(in). In terms of biological role, involved in trafficking to the vacuole. Required for cell proliferation and cell expansion, but not for cell differentiation. Acts in low affinity electroneutral exchange of protons for cations such as Na(+) or K(+) across membranes. May also exchange Li(+) and Cs(+) with a lower affinity. The protein is Sodium/hydrogen exchanger 5 (NHX5) of Arabidopsis thaliana (Mouse-ear cress).